Here is a 233-residue protein sequence, read N- to C-terminus: MDNHKVLILLPESLEIQEHIAFISTIFQKQYDETESIARDVQWKTKYYETTLDLYIDTYDVLQEWVNDFVSDECKELRDVISGIIFVFKDEDHKPPVECLKNLIDERIEDFTAKFFIGCYFNENVIEEDELYELNSDLLVQNFEIVNWFDKPDPSMDKVGSERIKEIIDVHPWLSHPETLKKNQGQINISPIDLDSFMTKLEQAKERYQTFDDSKEAELFIEKIIDELSDMIV.

It belongs to the IRC6 family.

Functionally, involved in gross chromosomal rearrangements (GCRs) and telomere healing. In Kluyveromyces lactis (strain ATCC 8585 / CBS 2359 / DSM 70799 / NBRC 1267 / NRRL Y-1140 / WM37) (Yeast), this protein is Increased recombination centers protein 6 (IRC6).